Consider the following 472-residue polypeptide: Adenosylhomocysteinase (472 aa).

3 residues coordinate substrate: T61, D136, and E196. 197–199 contacts NAD(+); sequence TTT. Residues K226 and D230 each coordinate substrate. NAD(+)-binding positions include N231, 260 to 265, E283, N318, 339 to 341, and N384; these read GYGDVG and IGH.

This sequence belongs to the adenosylhomocysteinase family. NAD(+) serves as cofactor.

The protein resides in the cytoplasm. The catalysed reaction is S-adenosyl-L-homocysteine + H2O = L-homocysteine + adenosine. Its pathway is amino-acid biosynthesis; L-homocysteine biosynthesis; L-homocysteine from S-adenosyl-L-homocysteine: step 1/1. May play a key role in the regulation of the intracellular concentration of adenosylhomocysteine. In Cupriavidus pinatubonensis (strain JMP 134 / LMG 1197) (Cupriavidus necator (strain JMP 134)), this protein is Adenosylhomocysteinase.